The following is a 121-amino-acid chain: Small ribosomal subunit protein uS13 (121 aa).

Residues 94–121 (GLPVRGQKTRNNAHTVKGKPKAIAGKKK) form a disordered region. Positions 109–121 (VKGKPKAIAGKKK) are enriched in basic residues.

Belongs to the universal ribosomal protein uS13 family. As to quaternary structure, part of the 30S ribosomal subunit. Forms a loose heterodimer with protein S19. Forms two bridges to the 50S subunit in the 70S ribosome.

Located at the top of the head of the 30S subunit, it contacts several helices of the 16S rRNA. In the 70S ribosome it contacts the 23S rRNA (bridge B1a) and protein L5 of the 50S subunit (bridge B1b), connecting the 2 subunits; these bridges are implicated in subunit movement. Contacts the tRNAs in the A and P-sites. The chain is Small ribosomal subunit protein uS13 from Onion yellows phytoplasma (strain OY-M).